Consider the following 479-residue polypeptide: ATP synthase subunit beta (479 aa).

Residue 153–160 coordinates ATP; that stretch reads GGAGVGKT.

The protein belongs to the ATPase alpha/beta chains family. In terms of assembly, F-type ATPases have 2 components, CF(1) - the catalytic core - and CF(0) - the membrane proton channel. CF(1) has five subunits: alpha(3), beta(3), gamma(1), delta(1), epsilon(1). CF(0) has three main subunits: a(1), b(2) and c(9-12). The alpha and beta chains form an alternating ring which encloses part of the gamma chain. CF(1) is attached to CF(0) by a central stalk formed by the gamma and epsilon chains, while a peripheral stalk is formed by the delta and b chains.

Its subcellular location is the cell membrane. The catalysed reaction is ATP + H2O + 4 H(+)(in) = ADP + phosphate + 5 H(+)(out). Produces ATP from ADP in the presence of a proton gradient across the membrane. The catalytic sites are hosted primarily by the beta subunits. In Lactobacillus delbrueckii subsp. bulgaricus (strain ATCC 11842 / DSM 20081 / BCRC 10696 / JCM 1002 / NBRC 13953 / NCIMB 11778 / NCTC 12712 / WDCM 00102 / Lb 14), this protein is ATP synthase subunit beta.